A 297-amino-acid chain; its full sequence is Nucleotide-binding protein Bphyt_0592 (297 aa).

Residue 8–15 coordinates ATP; it reads GISGSGKS. Position 57-60 (57-60) interacts with GTP; that stretch reads DARS.

It belongs to the RapZ-like family.

Functionally, displays ATPase and GTPase activities. The protein is Nucleotide-binding protein Bphyt_0592 of Paraburkholderia phytofirmans (strain DSM 17436 / LMG 22146 / PsJN) (Burkholderia phytofirmans).